A 504-amino-acid chain; its full sequence is Anaerobic nitric oxide reductase transcription regulator NorR (504 aa).

Asp-57 carries the post-translational modification 4-aspartylphosphate. A Sigma-54 factor interaction domain is found at 187–416; the sequence is MIGLSPGMTQ…LEHAIHRAVV (230 aa). ATP contacts are provided by residues 215 to 222 and 278 to 287; these read GETGTGKE and ADNGTLFLDE. The segment at residues 479–498 is a DNA-binding region (H-T-H motif); it reads WAACARMLETDVANLHRLAK.

It functions in the pathway nitrogen metabolism; nitric oxide reduction. In terms of biological role, required for the expression of anaerobic nitric oxide (NO) reductase, acts as a transcriptional activator for at least the norVW operon. Activation also requires sigma-54. The chain is Anaerobic nitric oxide reductase transcription regulator NorR from Escherichia coli O6:K15:H31 (strain 536 / UPEC).